The following is a 148-amino-acid chain: Large ribosomal subunit protein uL15 (148 aa).

Basic and acidic residues predominate over residues 1 to 10 (MQLHNLEYKK). Positions 1–42 (MQLHNLEYKKGSRNHKEKRVGRGHGSGLGKTSGRGQDGQKAR) are disordered. Residues 11 to 22 (GSRNHKEKRVGR) are compositionally biased toward basic residues. The span at 23–36 (GHGSGLGKTSGRGQ) shows a compositional bias: gly residues.

Belongs to the universal ribosomal protein uL15 family. Part of the 50S ribosomal subunit.

Its function is as follows. Binds to the 23S rRNA. This is Large ribosomal subunit protein uL15 from Ureaplasma parvum serovar 3 (strain ATCC 27815 / 27 / NCTC 11736).